Consider the following 218-residue polypeptide: Probable nicotinate-nucleotide adenylyltransferase (218 aa).

The protein belongs to the NadD family.

The enzyme catalyses nicotinate beta-D-ribonucleotide + ATP + H(+) = deamido-NAD(+) + diphosphate. It participates in cofactor biosynthesis; NAD(+) biosynthesis; deamido-NAD(+) from nicotinate D-ribonucleotide: step 1/1. Catalyzes the reversible adenylation of nicotinate mononucleotide (NaMN) to nicotinic acid adenine dinucleotide (NaAD). The chain is Probable nicotinate-nucleotide adenylyltransferase from Syntrophotalea carbinolica (strain DSM 2380 / NBRC 103641 / GraBd1) (Pelobacter carbinolicus).